The following is a 440-amino-acid chain: C4-dicarboxylate transport protein (440 aa).

Helical transmembrane passes span 7–29 (LYKS…GHYY), 49–66 (MVIA…IAGM), 79–101 (ALLY…VNVV), 143–165 (VVGA…FGFA), 186–208 (VMFN…AMAF), 221–243 (LGYL…LGGI), 291–313 (VVGL…YLTM), 328–350 (ITHQ…GVTG), and 355–377 (VLAA…ILGI). Positions 419 to 440 (GGAPLIDTRPTDDLGVAEGPAR) are disordered.

This sequence belongs to the dicarboxylate/amino acid:cation symporter (DAACS) (TC 2.A.23) family.

The protein resides in the cell inner membrane. In terms of biological role, responsible for the transport of dicarboxylates such as succinate, fumarate, and malate from the periplasm across the membrane. This chain is C4-dicarboxylate transport protein, found in Pseudomonas putida (strain ATCC 47054 / DSM 6125 / CFBP 8728 / NCIMB 11950 / KT2440).